The chain runs to 162 residues: uncharacterized protein (162 aa).

4 consecutive transmembrane segments (helical) span residues 15–35 (VLAIFIVLLIISAYLGFAPAL), 43–63 (VCHFFVFFLLTLVFYWVFDLS), 70–90 (LTILVCGVFGGLGSEFVQSFL), and 97–117 (LFDIVANLLGCSLALLLNILY).

It localises to the membrane. This is an uncharacterized protein from Schizosaccharomyces pombe (strain 972 / ATCC 24843) (Fission yeast).